Here is a 1351-residue protein sequence, read N- to C-terminus: uncharacterized protein (1351 aa).

Residues 1 to 17 (MSKKDSKNSPKKSKDTN) show a composition bias toward basic and acidic residues. The interval 1-31 (MSKKDSKNSPKKSKDTNSDESSSSNAETSSD) is disordered. Over residues 19 to 31 (DESSSSNAETSSD) the composition is skewed to low complexity.

This is an uncharacterized protein from Acanthamoeba polyphaga mimivirus (APMV).